The sequence spans 220 residues: Small ribosomal subunit protein uS3 (220 aa).

Residues Ile-24–Ser-93 form the KH type-2 domain.

Belongs to the universal ribosomal protein uS3 family. Part of the 30S ribosomal subunit.

Binds the lower part of the 30S subunit head. The sequence is that of Small ribosomal subunit protein uS3 from Pyrobaculum arsenaticum (strain DSM 13514 / JCM 11321 / PZ6).